Here is a 621-residue protein sequence, read N- to C-terminus: Chaperone protein HscA homolog (621 aa).

It belongs to the heat shock protein 70 family.

Chaperone involved in the maturation of iron-sulfur cluster-containing proteins. Has a low intrinsic ATPase activity which is markedly stimulated by HscB. In Polynucleobacter necessarius subsp. necessarius (strain STIR1), this protein is Chaperone protein HscA homolog.